A 718-amino-acid polypeptide reads, in one-letter code: ATP-dependent RNA helicase homolog DQX1 (718 aa).

The Helicase ATP-binding domain maps to 54–222 (HLESSPTGVV…WGNSPIVRVP (169 aa)). Position 67–74 (67–74 (GDPGSGKS)) interacts with ATP. The DEAQ box motif lies at 167 to 170 (DEAQ). In terms of domain architecture, Helicase C-terminal spans 245–447 (ACQAVLELCQ…ALMRALEDLD (203 aa)). The tract at residues 690 to 718 (QLREGTAEPPAAATETSSPQEYGDGCVLQ) is disordered. Low complexity predominate over residues 696-708 (AEPPAAATETSSP).

Ubiquitous.

Its subcellular location is the nucleus. In terms of biological role, might be involved in RNA metabolism; it is missing helicase motif III and may not have helicase activity. The sequence is that of ATP-dependent RNA helicase homolog DQX1 (Dqx1) from Mus musculus (Mouse).